Reading from the N-terminus, the 707-residue chain is Protein O-mannosyl-transferase TMEM260 (707 aa).

8 helical membrane-spanning segments follow: residues 28–48, 71–91, 94–114, 141–161, 189–209, 222–242, 318–338, and 356–376; these read GGVA…PPSV, YPLF…GSIA, VNLL…FTVF, IAAE…ALTV, NQHT…FQLL, LSLY…SSYL, NPSL…FFAW, and FWMQ…AAVV. Residues 377–707 lie on the Lumenal side of the membrane; the sequence is SETNRVLNSN…LQSLRNRKNV (331 aa). Residues asparagine 407, asparagine 535, and asparagine 568 are each glycosylated (N-linked (GlcNAc...) asparagine).

The protein belongs to the glycosyltransferase 117 (GT117) family. As to expression, expressed in brain, heart, kidney, liver, lung, pancreas and placenta but are not detected in skeletal muscle.

It localises to the endoplasmic reticulum membrane. The protein resides in the membrane. It catalyses the reaction a di-trans,poly-cis-dolichyl beta-D-mannosyl phosphate + L-seryl-[protein] = 3-O-(alpha-D-mannosyl)-L-seryl-[protein] + a di-trans,poly-cis-dolichyl phosphate + H(+). The catalysed reaction is a di-trans,poly-cis-dolichyl beta-D-mannosyl phosphate + L-threonyl-[protein] = 3-O-(alpha-D-mannosyl)-L-threonyl-[protein] + a di-trans,poly-cis-dolichyl phosphate + H(+). In terms of biological role, O-mannosyl-transferase that transfers mannosyl residues to the hydroxyl group of serine or threonine residues of proteins. Specifically glycosylates the IPT/TIG domain of target proteins, such as MET and MST1R/RON. TMEM260-mediated O-mannosylated residues are composed of single mannose glycans that are not elongated or modified. The protein is Protein O-mannosyl-transferase TMEM260 of Homo sapiens (Human).